We begin with the raw amino-acid sequence, 150 residues long: Large ribosomal subunit protein bL9 (150 aa).

Belongs to the bacterial ribosomal protein bL9 family.

Its function is as follows. Binds to the 23S rRNA. The protein is Large ribosomal subunit protein bL9 of Corynebacterium efficiens (strain DSM 44549 / YS-314 / AJ 12310 / JCM 11189 / NBRC 100395).